A 575-amino-acid polypeptide reads, in one-letter code: Mitochondrial 2-methylisocitrate lyase ICL2 (575 aa).

Residue cysteine 238 is part of the active site.

The protein belongs to the isocitrate lyase/PEP mutase superfamily. Isocitrate lyase family.

The protein localises to the mitochondrion matrix. The enzyme catalyses (2S,3R)-3-hydroxybutane-1,2,3-tricarboxylate = pyruvate + succinate. It functions in the pathway organic acid metabolism; propanoate degradation. In terms of biological role, catalyzes the formation of pyruvate and succinate from 2-methylisocitrate during the metabolism of endogenous propionyl-CoA. Does not act on isocitrate. The polypeptide is Mitochondrial 2-methylisocitrate lyase ICL2 (ICL2) (Saccharomyces cerevisiae (strain ATCC 204508 / S288c) (Baker's yeast)).